Reading from the N-terminus, the 322-residue chain is Ferredoxin--NADP reductase (322 aa).

Positions 34, 42, 47, 87, 120, 279, and 320 each coordinate FAD.

Belongs to the ferredoxin--NADP reductase type 2 family. Homodimer. FAD is required as a cofactor.

The enzyme catalyses 2 reduced [2Fe-2S]-[ferredoxin] + NADP(+) + H(+) = 2 oxidized [2Fe-2S]-[ferredoxin] + NADPH. The protein is Ferredoxin--NADP reductase of Streptococcus pneumoniae serotype 2 (strain D39 / NCTC 7466).